The following is a 716-amino-acid chain: Fatty acid oxidation complex subunit alpha (716 aa).

Residues 1–189 are enoyl-CoA hydratase/isomerase; that stretch reads MIYQSPTIQV…KVGAVDSVVA (189 aa). Substrate is bound at residue Asp-296. The interval 311 to 716 is 3-hydroxyacyl-CoA dehydrogenase; it reads KEVNNAAVLG…AANNGSYYQA (406 aa). Residues Met-324, Asp-343, 400-402, Lys-407, and Ser-429 contribute to the NAD(+) site; that span reads VVE. Catalysis depends on His-450, which acts as the For 3-hydroxyacyl-CoA dehydrogenase activity. Asn-453 provides a ligand contact to NAD(+). Substrate contacts are provided by Asn-500 and Tyr-660.

In the N-terminal section; belongs to the enoyl-CoA hydratase/isomerase family. The protein in the C-terminal section; belongs to the 3-hydroxyacyl-CoA dehydrogenase family. In terms of assembly, heterotetramer of two alpha chains (FadB) and two beta chains (FadA).

It carries out the reaction a (3S)-3-hydroxyacyl-CoA + NAD(+) = a 3-oxoacyl-CoA + NADH + H(+). The catalysed reaction is a (3S)-3-hydroxyacyl-CoA = a (2E)-enoyl-CoA + H2O. It catalyses the reaction a 4-saturated-(3S)-3-hydroxyacyl-CoA = a (3E)-enoyl-CoA + H2O. The enzyme catalyses (3S)-3-hydroxybutanoyl-CoA = (3R)-3-hydroxybutanoyl-CoA. It carries out the reaction a (3Z)-enoyl-CoA = a 4-saturated (2E)-enoyl-CoA. The catalysed reaction is a (3E)-enoyl-CoA = a 4-saturated (2E)-enoyl-CoA. The protein operates within lipid metabolism; fatty acid beta-oxidation. Involved in the aerobic and anaerobic degradation of long-chain fatty acids via beta-oxidation cycle. Catalyzes the formation of 3-oxoacyl-CoA from enoyl-CoA via L-3-hydroxyacyl-CoA. It can also use D-3-hydroxyacyl-CoA and cis-3-enoyl-CoA as substrate. In Shewanella baltica (strain OS185), this protein is Fatty acid oxidation complex subunit alpha.